Reading from the N-terminus, the 506-residue chain is ATP synthase subunit alpha, chloroplastic (506 aa).

170–177 (GDRQTGKT) serves as a coordination point for ATP. Residue threonine 257 is modified to Phosphothreonine.

It belongs to the ATPase alpha/beta chains family. As to quaternary structure, F-type ATPases have 2 components, CF(1) - the catalytic core - and CF(0) - the membrane proton channel. CF(1) has five subunits: alpha(3), beta(3), gamma(1), delta(1), epsilon(1). CF(0) has four main subunits: a, b, b' and c.

Its subcellular location is the plastid. The protein resides in the chloroplast thylakoid membrane. It carries out the reaction ATP + H2O + 4 H(+)(in) = ADP + phosphate + 5 H(+)(out). Produces ATP from ADP in the presence of a proton gradient across the membrane. The alpha chain is a regulatory subunit. This chain is ATP synthase subunit alpha, chloroplastic, found in Olimarabidopsis pumila (Dwarf rocket).